The chain runs to 139 residues: Small ribosomal subunit protein uS9 (139 aa).

It belongs to the universal ribosomal protein uS9 family.

The chain is Small ribosomal subunit protein uS9 from Coxiella burnetii (strain CbuK_Q154) (Coxiella burnetii (strain Q154)).